The chain runs to 39 residues: Photosystem II reaction center protein J (39 aa).

The chain crosses the membrane as a helical span at residues 9-29 (LWIIATFGGIAALTVVGLFIY).

Belongs to the PsbJ family. In terms of assembly, PSII is composed of 1 copy each of membrane proteins PsbA, PsbB, PsbC, PsbD, PsbE, PsbF, PsbH, PsbI, PsbJ, PsbK, PsbL, PsbM, PsbT, PsbX, PsbY, PsbZ, Psb30/Ycf12, at least 3 peripheral proteins of the oxygen-evolving complex and a large number of cofactors. It forms dimeric complexes.

The protein localises to the plastid. The protein resides in the chloroplast thylakoid membrane. Functionally, one of the components of the core complex of photosystem II (PSII). PSII is a light-driven water:plastoquinone oxidoreductase that uses light energy to abstract electrons from H(2)O, generating O(2) and a proton gradient subsequently used for ATP formation. It consists of a core antenna complex that captures photons, and an electron transfer chain that converts photonic excitation into a charge separation. This Guillardia theta (Cryptophyte) protein is Photosystem II reaction center protein J.